A 293-amino-acid polypeptide reads, in one-letter code: Phosphoribosylaminoimidazole-succinocarboxamide synthase (293 aa).

The protein belongs to the SAICAR synthetase family.

It carries out the reaction 5-amino-1-(5-phospho-D-ribosyl)imidazole-4-carboxylate + L-aspartate + ATP = (2S)-2-[5-amino-1-(5-phospho-beta-D-ribosyl)imidazole-4-carboxamido]succinate + ADP + phosphate + 2 H(+). The protein operates within purine metabolism; IMP biosynthesis via de novo pathway; 5-amino-1-(5-phospho-D-ribosyl)imidazole-4-carboxamide from 5-amino-1-(5-phospho-D-ribosyl)imidazole-4-carboxylate: step 1/2. The chain is Phosphoribosylaminoimidazole-succinocarboxamide synthase from Bordetella parapertussis (strain 12822 / ATCC BAA-587 / NCTC 13253).